The following is a 436-amino-acid chain: Protein arginine methyltransferase NDUFAF7, mitochondrial (436 aa).

The N-terminal 41 residues, 1–41, are a transit peptide targeting the mitochondrion; that stretch reads MNALVRRCVARTGIPSIWRRKCFSSGNEPAESNHVTPMLRH. The segment at 413 to 436 is disordered; the sequence is QGGKACQSEAPSTSVPGFDELVWH.

This sequence belongs to the NDUFAF7 family. As to quaternary structure, interacts with NDUFS2.

The protein resides in the mitochondrion. It carries out the reaction L-arginyl-[protein] + 2 S-adenosyl-L-methionine = N(omega),N(omega)'-dimethyl-L-arginyl-[protein] + 2 S-adenosyl-L-homocysteine + 2 H(+). In terms of biological role, arginine methyltransferase involved in the assembly or stability of mitochondrial NADH:ubiquinone oxidoreductase complex (complex I). Acts by mediating symmetric dimethylation of 'Arg-118' of NDUFS2 after it assembles into the complex I, stabilizing the early intermediate complex. The sequence is that of Protein arginine methyltransferase NDUFAF7, mitochondrial from Rattus norvegicus (Rat).